A 259-amino-acid chain; its full sequence is Ribosomal RNA small subunit methyltransferase A (259 aa).

Residues Asn13, Thr15, Gly40, Glu61, Asp85, and Asn105 each contribute to the S-adenosyl-L-methionine site.

This sequence belongs to the class I-like SAM-binding methyltransferase superfamily. rRNA adenine N(6)-methyltransferase family. RsmA subfamily.

The protein localises to the cytoplasm. The catalysed reaction is adenosine(1518)/adenosine(1519) in 16S rRNA + 4 S-adenosyl-L-methionine = N(6)-dimethyladenosine(1518)/N(6)-dimethyladenosine(1519) in 16S rRNA + 4 S-adenosyl-L-homocysteine + 4 H(+). Its function is as follows. Specifically dimethylates two adjacent adenosines (A1518 and A1519) in the loop of a conserved hairpin near the 3'-end of 16S rRNA in the 30S particle. May play a critical role in biogenesis of 30S subunits. This is Ribosomal RNA small subunit methyltransferase A from Mycoplasma genitalium (strain ATCC 33530 / DSM 19775 / NCTC 10195 / G37) (Mycoplasmoides genitalium).